Reading from the N-terminus, the 326-residue chain is Adenine deaminase (326 aa).

The Zn(2+) site is built by histidine 14, histidine 16, and histidine 194. Residue glutamate 197 is the Proton donor of the active site. Aspartate 275 contacts Zn(2+). Aspartate 276 is a substrate binding site.

Belongs to the metallo-dependent hydrolases superfamily. Adenosine and AMP deaminases family. Adenine deaminase type 2 subfamily. Zn(2+) is required as a cofactor.

The enzyme catalyses adenine + H2O + H(+) = hypoxanthine + NH4(+). Functionally, catalyzes the hydrolytic deamination of adenine to hypoxanthine. Plays an important role in the purine salvage pathway and in nitrogen catabolism. The chain is Adenine deaminase from Crocosphaera subtropica (strain ATCC 51142 / BH68) (Cyanothece sp. (strain ATCC 51142)).